Reading from the N-terminus, the 236-residue chain is 2-C-methyl-D-erythritol 4-phosphate cytidylyltransferase (236 aa).

It belongs to the IspD/TarI cytidylyltransferase family. IspD subfamily. In terms of assembly, homodimer.

It catalyses the reaction 2-C-methyl-D-erythritol 4-phosphate + CTP + H(+) = 4-CDP-2-C-methyl-D-erythritol + diphosphate. The protein operates within isoprenoid biosynthesis; isopentenyl diphosphate biosynthesis via DXP pathway; isopentenyl diphosphate from 1-deoxy-D-xylulose 5-phosphate: step 2/6. Functionally, catalyzes the formation of 4-diphosphocytidyl-2-C-methyl-D-erythritol from CTP and 2-C-methyl-D-erythritol 4-phosphate (MEP). In Escherichia coli O7:K1 (strain IAI39 / ExPEC), this protein is 2-C-methyl-D-erythritol 4-phosphate cytidylyltransferase.